The following is a 431-amino-acid chain: V-type ATP synthase beta chain (431 aa).

This sequence belongs to the ATPase alpha/beta chains family.

Functionally, produces ATP from ADP in the presence of a proton gradient across the membrane. The V-type beta chain is a regulatory subunit. The protein is V-type ATP synthase beta chain of Treponema denticola (strain ATCC 35405 / DSM 14222 / CIP 103919 / JCM 8153 / KCTC 15104).